An 838-amino-acid chain; its full sequence is U1 SNP1-associating protein 1 (838 aa).

At 1-536 (MSEYLAQTPC…VRPLRNSFPL (536 aa)) the chain is on the cytoplasmic side. The interval 31–240 (HPLSTVGRLL…DFAPAHNSFF (210 aa)) is required for ERAD-L function. Positions 259–318 (ERFVLEFISDATLSITQMNVKPDTTVKQVKDFICSVYTHSLNLRRNDIKLIYKGQLLHEN) constitute a Ubiquitin-like domain. Residues 319-418 (NFAGNSSKIS…VPTDELYRKC (100 aa)) form an important for HRD1 oligomer formation region. An interaction with HRD1 region spans residues 345–535 (QEYTESGPGF…VVRPLRNSFP (191 aa)). Ser374, Ser376, and Ser379 each carry phosphoserine. Residues 437 to 490 (SSYLSVIKGDYGEIKIPISSNDYRINGDNILLSPSAIEQLESALNFKIERPRDS) are required for ERAD-L function and HRD1 oligomer formation. Residues 537 to 559 (LLVLIRTFYLIGYNSLVPFFIIL) traverse the membrane as a helical segment. Residues 560–563 (EFGS) lie on the Extracellular side of the membrane. Residues 564–583 (FLPWKYIILLSLLFIFRTVW) traverse the membrane as a helical segment. The Cytoplasmic portion of the chain corresponds to 584-838 (NTQEVWNLWR…QPHLYIPDED (255 aa)). Residues 584–838 (NTQEVWNLWR…QPHLYIPDED (255 aa)) are interaction with DER1. The tract at residues 795–838 (ARDREQPAPSAQQQENEDEALIIPDEEEPTATGAQPHLYIPDED) is disordered. Residues 809–823 (ENEDEALIIPDEEEP) are compositionally biased toward acidic residues.

Component of the HRD1 ubiquitin ligase complex which contains the E3 ligase HRD1, its cofactors HRD3, USA1 and DER1, substrate recruiting factor YOS9 and CDC48-binding protein UBX2. Within the complex, interacts directly with HRD1 (via N-terminus) and DER1 (via C-terminus) and indirectly with HRD3. In ERAD-L, HRD3 and YOS9 jointly bind misfolded glycoproteins in the endoplasmic reticulum (ER) lumen. Movement of ERAD-L substrates through the ER membrane is facilitated by HRD1 and DER1 which have lateral gates facing each other and which distort the membrane region between the lateral gates, making it much thinner than a normal phospholipid bilayer. Substrates insert into the membrane as a hairpin loop with one strand interacting with DER1 and the other with HRD1. The HRD1 complex interacts with the heterotrimeric CDC48-NPL4-UFD1 ATPase complex which is recruited by UBX2 via its interaction with CDC48 and which moves ubiquitinated substrates to the cytosol for targeting to the proteasome.

It is found in the endoplasmic reticulum membrane. Scaffold protein of the endoplasmic reticulum-associated degradation (ERAD) (also known as endoplasmic reticulum quality control, ERQC) pathway involved in ubiquitin-dependent degradation of misfolded endoplasmic reticulum proteins. Component of the HRD1 ubiquitin ligase complex, which is part of the ERAD-L and ERAD-M pathways responsible for the rapid degradation of soluble lumenal and membrane proteins with misfolded lumenal domains (ERAD-L), or ER-membrane proteins with misfolded transmembrane domains (ERAD-M). Has multiple functions in ERAD including recruitment of DER1 to the HRD1 ubiquitin ligase, and regulation of HRD1 activity. Involved in oligomerization of HRD1 and in HRD1 autoubiquitination and degradation. The polypeptide is U1 SNP1-associating protein 1 (USA1) (Saccharomyces cerevisiae (strain ATCC 204508 / S288c) (Baker's yeast)).